We begin with the raw amino-acid sequence, 180 residues long: Peptidyl-tRNA hydrolase (180 aa).

TRNA is bound at residue Tyr-15. His-20 acts as the Proton acceptor in catalysis. Residues Phe-67, Asn-69, and Asn-115 each coordinate tRNA.

This sequence belongs to the PTH family. In terms of assembly, monomer.

The protein localises to the cytoplasm. The catalysed reaction is an N-acyl-L-alpha-aminoacyl-tRNA + H2O = an N-acyl-L-amino acid + a tRNA + H(+). Functionally, hydrolyzes ribosome-free peptidyl-tRNAs (with 1 or more amino acids incorporated), which drop off the ribosome during protein synthesis, or as a result of ribosome stalling. Catalyzes the release of premature peptidyl moieties from peptidyl-tRNA molecules trapped in stalled 50S ribosomal subunits, and thus maintains levels of free tRNAs and 50S ribosomes. In Chlamydia pneumoniae (Chlamydophila pneumoniae), this protein is Peptidyl-tRNA hydrolase.